The sequence spans 762 residues: 5-methyltetrahydropteroyltriglutamate--homocysteine methyltransferase (762 aa).

Residues 17–20 and Lys-111 each bind 5-methyltetrahydropteroyltri-L-glutamate; that span reads REWK. L-homocysteine contacts are provided by residues 435-437 and Glu-488; that span reads IGS. Residues 435-437 and Glu-488 each bind L-methionine; that span reads IGS. Residues 519 to 520 and Trp-565 contribute to the 5-methyltetrahydropteroyltri-L-glutamate site; that span reads RC. Asp-603 is a binding site for L-homocysteine. Asp-603 lines the L-methionine pocket. Glu-609 contributes to the 5-methyltetrahydropteroyltri-L-glutamate binding site. His-645, Cys-647, and Glu-669 together coordinate Zn(2+). His-698 (proton donor) is an active-site residue. Cys-730 contacts Zn(2+).

Belongs to the vitamin-B12 independent methionine synthase family. Zn(2+) is required as a cofactor.

The catalysed reaction is 5-methyltetrahydropteroyltri-L-glutamate + L-homocysteine = tetrahydropteroyltri-L-glutamate + L-methionine. It participates in amino-acid biosynthesis; L-methionine biosynthesis via de novo pathway; L-methionine from L-homocysteine (MetE route): step 1/1. In terms of biological role, catalyzes the transfer of a methyl group from 5-methyltetrahydrofolate to homocysteine resulting in methionine formation. This Bacillus mycoides (strain KBAB4) (Bacillus weihenstephanensis) protein is 5-methyltetrahydropteroyltriglutamate--homocysteine methyltransferase.